The chain runs to 364 residues: Membrane-bound lytic murein transglycosylase C (364 aa).

The signal sequence occupies residues 1–19; that stretch reads MNKYKKFLPLLVLIPFLAS. C20 carries N-palmitoyl cysteine lipidation. C20 is lipidated: S-diacylglycerol cysteine.

This sequence belongs to the transglycosylase Slt family.

The protein resides in the cell outer membrane. The enzyme catalyses Exolytic cleavage of the (1-&gt;4)-beta-glycosidic linkage between N-acetylmuramic acid (MurNAc) and N-acetylglucosamine (GlcNAc) residues in peptidoglycan, from either the reducing or the non-reducing ends of the peptidoglycan chains, with concomitant formation of a 1,6-anhydrobond in the MurNAc residue.. In terms of biological role, murein-degrading enzyme. May play a role in recycling of muropeptides during cell elongation and/or cell division. The sequence is that of Membrane-bound lytic murein transglycosylase C from Glaesserella parasuis serovar 5 (strain SH0165) (Haemophilus parasuis).